The sequence spans 262 residues: MNNIWWQTKGQGNVHLVLLHGWGLNAEVWRCIDEELSSHFTLHLVDLPGFGRSRGFGALSLADMAEAVLQQAPDKAIWLGWSLGGLVASQIALTHPERVQALVTVASSPCFSARDEWPGIKPDVLAGFQQQLSDDFQRTVERFLALQTMGTETARQDARALKKTVLALPMPEVDVLNGGLEILKTVDLRQPLQNVSMPFLRLYGYLDGLVPRKVVPMLDKLWPHSESYIFAKAAHAPFISHPVEFCHLLVALKQRVLVVSES.

The region spanning His-15 to Pro-242 is the AB hydrolase-1 domain. Substrate-binding positions include Trp-22, Ser-82 to Leu-83, and Phe-143 to Gln-147. Residue Ser-82 is the Nucleophile of the active site. Residues Asp-207 and His-235 contribute to the active site. His-235 is a binding site for substrate.

It belongs to the AB hydrolase superfamily. Carboxylesterase BioH family. Monomer.

It localises to the cytoplasm. The catalysed reaction is 6-carboxyhexanoyl-[ACP] methyl ester + H2O = 6-carboxyhexanoyl-[ACP] + methanol + H(+). Its pathway is cofactor biosynthesis; biotin biosynthesis. The physiological role of BioH is to remove the methyl group introduced by BioC when the pimeloyl moiety is complete. It allows to synthesize pimeloyl-ACP via the fatty acid synthetic pathway through the hydrolysis of the ester bonds of pimeloyl-ACP esters. The sequence is that of Pimeloyl-[acyl-carrier protein] methyl ester esterase from Shigella flexneri.